A 216-amino-acid polypeptide reads, in one-letter code: 3-isopropylmalate dehydratase small subunit (216 aa).

This sequence belongs to the LeuD family. LeuD type 1 subfamily. As to quaternary structure, heterodimer of LeuC and LeuD.

The catalysed reaction is (2R,3S)-3-isopropylmalate = (2S)-2-isopropylmalate. It participates in amino-acid biosynthesis; L-leucine biosynthesis; L-leucine from 3-methyl-2-oxobutanoate: step 2/4. Functionally, catalyzes the isomerization between 2-isopropylmalate and 3-isopropylmalate, via the formation of 2-isopropylmaleate. The sequence is that of 3-isopropylmalate dehydratase small subunit from Burkholderia ambifaria (strain MC40-6).